Consider the following 1029-residue polypeptide: U2 snRNP-associated SURP motif-containing protein (1029 aa).

Disordered stretches follow at residues 1-111 (MADK…EDEK) and 141-274 (VNAA…PSTT). Residue A2 is modified to N-acetylalanine. The span at 7 to 16 (GGSQKASSKT) shows a compositional bias: polar residues. The segment covering 45–54 (TRPKSPRKHN) has biased composition (basic residues). Residues 55–64 (YRNESARESL) are compositionally biased toward basic and acidic residues. S67 is modified (phosphoserine). A Glycyl lysine isopeptide (Lys-Gly) (interchain with G-Cter in SUMO2) cross-link involves residue K80. A coiled-coil region spans residues 92 to 121 (AKRTLSKKEQEELKKKEDEKAAAEIYEEFL). Basic and acidic residues-rich tracts occupy residues 97-111 (SKKE…EDEK) and 144-155 (AKEEHETDEKRG). Glycyl lysine isopeptide (Lys-Gly) (interchain with G-Cter in SUMO2) cross-links involve residues K145 and K168. Residues 169–178 (NPPNQSSNER) are compositionally biased toward polar residues. Basic and acidic residues predominate over residues 186–222 (ETKKPPLKKGEKEKKKSNLELFKEELKQIQEERDERH). A coiled-coil region spans residues 192–232 (LKKGEKEKKKSNLELFKEELKQIQEERDERHKTKGRLSRFE). S202 carries the post-translational modification Phosphoserine. K208 participates in a covalent cross-link: Glycyl lysine isopeptide (Lys-Gly) (interchain with G-Cter in SUMO2). At S236 the chain carries Phosphoserine. The segment covering 239–249 (DGQRRSMDAPS) has biased composition (basic and acidic residues). The region spanning 274–355 (TNLYLGNINP…FEMKLGWGKA (82 aa)) is the RRM domain. Residues 430–473 (LIHRMIEFVVREGPMFEAMIMNREINNPMFRFLFENQTPAHVYY) form an SURP motif repeat. The residue at position 485 (S485) is a Phosphoserine. The 146-residue stretch at 534 to 679 (LKEEQRDKLE…KLQNIFLGLV (146 aa)) folds into the CID domain. T719 bears the Phosphothreonine mark. Glycyl lysine isopeptide (Lys-Gly) (interchain with G-Cter in SUMO2) cross-links involve residues K748 and K749. N6-acetyllysine; alternate is present on K760. K760 participates in a covalent cross-link: Glycyl lysine isopeptide (Lys-Gly) (interchain with G-Cter in SUMO2); alternate. Disordered regions lie at residues 778–841 (KWEL…EEKR) and 855–1029 (QDEL…KNKH). Positions 786–806 (EESEEEENQNQEEESEDEEDT) are enriched in acidic residues. Phosphoserine is present on residues S788, S800, and S811. Composition is skewed to basic and acidic residues over residues 810-841 (KSEE…EEKR) and 874-922 (QVEH…TPTR). Residues K822, K829, and K832 each participate in a glycyl lysine isopeptide (Lys-Gly) (interchain with G-Cter in SUMO2) cross-link. Positions 837 to 915 (SEEKRAKLRE…ESRSKDKKEK (79 aa)) form a coiled coil. T931 bears the Phosphothreonine mark. A phosphoserine mark is found at S946 and S948. Positions 950–980 (KSERSERSERSHKESSRSRSSHKDSPRDVSK) are enriched in basic and acidic residues. Positions 991–1029 (TPKRSRRSRSRSPKKSGKKSRSQSRSPHRSHKKSKKNKH) are enriched in basic residues.

It belongs to the splicing factor SR family. In terms of assembly, interacts with ERBB4.

Its subcellular location is the nucleus. This chain is U2 snRNP-associated SURP motif-containing protein (U2SURP), found in Homo sapiens (Human).